The following is a 167-amino-acid chain: Small heat shock protein C1 (167 aa).

A sHSP domain is found at 59–167 (SLYESNSIKS…EQEAREIVID (109 aa)).

The protein belongs to the small heat shock protein (HSP20) family.

This chain is Small heat shock protein C1 (hspC1), found in Rickettsia conorii (strain ATCC VR-613 / Malish 7).